Consider the following 684-residue polypeptide: Probable potassium transport system protein Kup (684 aa).

Transmembrane regions (helical) follow at residues 19 to 39, 61 to 81, 104 to 124, 151 to 171, 177 to 197, 223 to 243, 255 to 275, 303 to 323, 352 to 372, 381 to 401, 407 to 427, and 433 to 453; these read ALLV…LYVM, VSLI…LIAL, WLVL…MLTP, QVIW…RFGT, AFGP…FIAL, MGLF…ALYS, LSWP…AVWL, LGAI…LISG, LYIP…IGYF, AYGL…YQYL, PAVI…VFFI, and FLHG…VMYV.

The protein belongs to the HAK/KUP transporter (TC 2.A.72) family.

It localises to the cell membrane. The enzyme catalyses K(+)(in) + H(+)(in) = K(+)(out) + H(+)(out). Functionally, transport of potassium into the cell. Likely operates as a K(+):H(+) symporter. The sequence is that of Probable potassium transport system protein Kup from Lacticaseibacillus casei (strain BL23) (Lactobacillus casei).